The chain runs to 274 residues: 3-methyl-2-oxobutanoate hydroxymethyltransferase (274 aa).

Positions 44 and 83 each coordinate Mg(2+). 3-methyl-2-oxobutanoate-binding positions include 44–45, aspartate 83, and lysine 113; that span reads DS. Residue glutamate 115 participates in Mg(2+) binding. Glutamate 182 acts as the Proton acceptor in catalysis.

The protein belongs to the PanB family. Homodecamer; pentamer of dimers. It depends on Mg(2+) as a cofactor.

It is found in the cytoplasm. It catalyses the reaction 3-methyl-2-oxobutanoate + (6R)-5,10-methylene-5,6,7,8-tetrahydrofolate + H2O = 2-dehydropantoate + (6S)-5,6,7,8-tetrahydrofolate. The protein operates within cofactor biosynthesis; (R)-pantothenate biosynthesis; (R)-pantoate from 3-methyl-2-oxobutanoate: step 1/2. In terms of biological role, catalyzes the reversible reaction in which hydroxymethyl group from 5,10-methylenetetrahydrofolate is transferred onto alpha-ketoisovalerate to form ketopantoate. In Campylobacter jejuni (strain RM1221), this protein is 3-methyl-2-oxobutanoate hydroxymethyltransferase.